Here is a 227-residue protein sequence, read N- to C-terminus: Riboflavin kinase (227 aa).

Positions 1–92 (MSKDYEVFPL…LKRTIDSSTF (92 aa)) are H-T-H motif-like. Positions 93 to 227 (LTLRGYVVPG…GDKVEVVIPV (135 aa)) are riboflavin kinase. A CDP-binding site is contributed by 102–107 (GLGEGA). Residues T131 and N133 each coordinate Mg(2+). FMN is bound by residues T194 and E202. Position 207–210 (207–210 (VRLR)) interacts with CDP.

Belongs to the archaeal riboflavin kinase family. Requires Mg(2+) as cofactor.

It carries out the reaction riboflavin + CTP = CDP + FMN + H(+). The protein operates within cofactor biosynthesis; FMN biosynthesis; FMN from riboflavin (CTP route): step 1/1. Functionally, catalyzes the CTP-dependent phosphorylation of riboflavin (vitamin B2) to form flavin mononucleotide (FMN). The protein is Riboflavin kinase (ribK) of Thermofilum pendens (strain DSM 2475 / Hrk 5).